Consider the following 602-residue polypeptide: Elongation factor 4 (602 aa).

One can recognise a tr-type G domain in the interval 7 to 189 (KYIRNFSIVA…AIVNKVPAPD (183 aa)). Residues 19 to 24 (DHGKST) and 136 to 139 (NKID) contribute to the GTP site.

Belongs to the TRAFAC class translation factor GTPase superfamily. Classic translation factor GTPase family. LepA subfamily.

It localises to the cell membrane. The enzyme catalyses GTP + H2O = GDP + phosphate + H(+). Required for accurate and efficient protein synthesis under certain stress conditions. May act as a fidelity factor of the translation reaction, by catalyzing a one-codon backward translocation of tRNAs on improperly translocated ribosomes. Back-translocation proceeds from a post-translocation (POST) complex to a pre-translocation (PRE) complex, thus giving elongation factor G a second chance to translocate the tRNAs correctly. Binds to ribosomes in a GTP-dependent manner. The sequence is that of Elongation factor 4 from Clostridium botulinum (strain ATCC 19397 / Type A).